The primary structure comprises 255 residues: Cyclic di-GMP phosphodiesterase PdeH (255 aa).

In terms of domain architecture, EAL spans 13 to 255 (EASIESLQER…ETLNTAVLAL (243 aa)).

The enzyme catalyses 3',3'-c-di-GMP + H2O = 5'-phosphoguanylyl(3'-&gt;5')guanosine + H(+). In terms of biological role, involved in the control of the switch from cell motility to adhesion via regulation of cellular levels of cyclic-di-GMP (c-di-GMP). Part of a signaling cascade that regulates curli biosynthesis. The cascade is composed of two c-di-GMP control modules, in which c-di-GMP controlled by the DgcE/PdeH pair (module I) regulates the activity of the DgcM/PdeR pair (module II), which in turn regulates activity of the transcription factor MlrA and expression of the master biofilm regulator csgD. Effect on flagella is controlled via the c-di-GMP-binding flagellar brake protein YcgR. This Escherichia coli (strain K12) protein is Cyclic di-GMP phosphodiesterase PdeH.